The primary structure comprises 546 residues: Chaperonin GroEL 2 (546 aa).

ATP contacts are provided by residues 30–33 (TLGP), Lys-51, 87–91 (DGTTT), Gly-415, and Asp-495.

The protein belongs to the chaperonin (HSP60) family. Forms a cylinder of 14 subunits composed of two heptameric rings stacked back-to-back. Interacts with the co-chaperonin GroES.

The protein localises to the cytoplasm. It catalyses the reaction ATP + H2O + a folded polypeptide = ADP + phosphate + an unfolded polypeptide.. Its function is as follows. Together with its co-chaperonin GroES, plays an essential role in assisting protein folding. The GroEL-GroES system forms a nano-cage that allows encapsulation of the non-native substrate proteins and provides a physical environment optimized to promote and accelerate protein folding. The sequence is that of Chaperonin GroEL 2 from Burkholderia cenocepacia (strain HI2424).